Reading from the N-terminus, the 752-residue chain is Ribonucleases P/MRP protein subunit popl-1 (752 aa).

The disordered stretch occupies residues 638-663 (KTTKRKRVNRKKRESKKRRKIEQEKR). A compositionally biased stretch (basic residues) spans 640-657 (TKRKRVNRKKRESKKRRK).

In terms of assembly, component of nuclear RNase P and RNase MRP ribonucleoproteins. Several subunits of RNase P are also part of the RNase MRP complex.

Its subcellular location is the nucleus. It is found in the nucleolus. The catalysed reaction is Endonucleolytic cleavage of RNA, removing 5'-extranucleotides from tRNA precursor.. Its function is as follows. Component of ribonuclease P, a ribonucleoprotein complex that generates mature tRNA molecules by cleaving their 5'-ends. Also a component of the MRP ribonuclease complex, which cleaves pre-rRNA sequences. This is Ribonucleases P/MRP protein subunit popl-1 from Caenorhabditis elegans.